A 119-amino-acid polypeptide reads, in one-letter code: Large ribosomal subunit protein bL20 (119 aa).

Belongs to the bacterial ribosomal protein bL20 family.

In terms of biological role, binds directly to 23S ribosomal RNA and is necessary for the in vitro assembly process of the 50S ribosomal subunit. It is not involved in the protein synthesizing functions of that subunit. The chain is Large ribosomal subunit protein bL20 from Shewanella woodyi (strain ATCC 51908 / MS32).